The following is a 1199-amino-acid chain: Nuclear envelope pore membrane protein POM 121 (1199 aa).

Positions Met-1–Gly-29 are disordered. The segment at Met-1–Ala-56 is cisternal side. The segment covering Gly-10–Gly-25 has biased composition (basic and acidic residues). A helical membrane pass occupies residues Leu-57–Gly-77. A pore side region spans residues Arg-76 to Lys-1199. The segment at Ser-82 to Ser-197 is disordered. Ser-83 and Ser-244 each carry phosphoserine. 6 disordered regions span residues Lys-294–Glu-328, Gly-344–Glu-509, Asp-528–Thr-631, Lys-701–Thr-734, Gly-1061–Phe-1151, and Gly-1163–Lys-1199. The segment covering Thr-298–Asn-312 has biased composition (basic and acidic residues). Phosphoserine occurs at positions 319, 322, 325, 345, 355, 367, and 370. The span at Thr-365–Thr-376 shows a compositional bias: low complexity. Polar residues predominate over residues Ile-379–Val-397. Positions Ser-404 to Ser-419 are enriched in low complexity. 6 positions are modified to phosphoserine: Ser-408, Ser-409, Ser-412, Ser-413, Ser-416, and Ser-417. 2 stretches are compositionally biased toward basic and acidic residues: residues Arg-424–Cys-435 and Thr-446–Thr-456. A compositionally biased stretch (polar residues) spans Gly-461–Gly-477. Composition is skewed to low complexity over residues Ala-533 to Pro-547, Pro-557 to Glu-574, and Glu-581 to Ala-598. Over residues Leu-619–Thr-631 the composition is skewed to polar residues. 2 stretches are compositionally biased toward low complexity: residues Pro-715–Thr-734 and Leu-1064–Ser-1098. Residues Gln-1099 to Glu-1120 are compositionally biased toward polar residues. Positions Leu-1189 to Lys-1199 are enriched in basic residues.

The protein belongs to the POM121 family. Post-translationally, proteolytically cleaved by caspase-3 during apoptosis.

The protein localises to the nucleus. It localises to the nuclear pore complex. Its subcellular location is the nucleus membrane. The protein resides in the endoplasmic reticulum membrane. Functionally, essential component of the nuclear pore complex (NPC). The repeat-containing domain may be involved in anchoring components of the pore complex to the pore membrane. When overexpressed in cells induces the formation of cytoplasmic annulate lamellae (AL). The protein is Nuclear envelope pore membrane protein POM 121 (Pom121) of Rattus norvegicus (Rat).